The chain runs to 162 residues: Transcription antitermination protein NusB (162 aa).

This sequence belongs to the NusB family.

Its function is as follows. Involved in transcription antitermination. Required for transcription of ribosomal RNA (rRNA) genes. Binds specifically to the boxA antiterminator sequence of the ribosomal RNA (rrn) operons. The protein is Transcription antitermination protein NusB of Mycobacterium sp. (strain JLS).